The sequence spans 1155 residues: Protein BREAST CANCER SUSCEPTIBILITY 2 homolog B (1155 aa).

BRCA2 repeat units follow at residues 63–97 (MPGE…ENVA), 116–150 (TAET…SDMI), 163–197 (FGVP…LEED), and 257–291 (LKVP…DPEL).

In terms of assembly, interacts with RAD51 and DMC1. Interacts with DSS1(I) and DSS1(V). Can interact with both RAD51 and DSS1(I) or both DMC1 and DSS1(I) in a tripartite complex. In terms of tissue distribution, expressed in flower buds.

Its function is as follows. Involved in double-strand break repair and/or homologous recombination by mediating RAD51- and DMC1-facilitated DNA repair. Plays an essential role in both somatic and meiotic homologous recombination. Is crucial for the formation of RAD51 and DMC1 foci during male meiotic homologous recombination in prophase I. This Arabidopsis thaliana (Mouse-ear cress) protein is Protein BREAST CANCER SUSCEPTIBILITY 2 homolog B.